A 641-amino-acid chain; its full sequence is Methylenetetrahydrofolate reductase 2 (641 aa).

E20 serves as the catalytic Proton donor/acceptor. Residues 20–25 and 52–53 contribute to the NAD(+) site; these read EYFPPK and TW. Residues 52–53, H81, 111–113, Y153, D172, and K179 contribute to the FAD site; these read TW and RGD. Substrate is bound at residue D113. Residue Q190 participates in substrate binding.

It belongs to the methylenetetrahydrofolate reductase family. Requires FAD as cofactor.

It catalyses the reaction (6S)-5-methyl-5,6,7,8-tetrahydrofolate + NADP(+) = (6R)-5,10-methylene-5,6,7,8-tetrahydrofolate + NADPH + H(+). It participates in one-carbon metabolism; tetrahydrofolate interconversion. Its function is as follows. Major methylenetetrahydrofolate reductase required to generate the methyl groups necessary for methionine synthetase to convert homocysteine to methionine. Performs 15 to 20 percent of the total methylenetetrahydrofolate reductase activity of the cells. This is Methylenetetrahydrofolate reductase 2 (met11) from Schizosaccharomyces pombe (strain 972 / ATCC 24843) (Fission yeast).